Here is a 922-residue protein sequence, read N- to C-terminus: Metabotropic glutamate receptor 7 (922 aa).

An N-terminal signal peptide occupies residues 1–34 (MVQLRKLLRVLTLMKFPCCVLEVLLCALAAAARG). The Extracellular segment spans residues 35–590 (QEMYAPHSIR…IIKLEWHSPW (556 aa)). Cys-67 and Cys-109 are joined by a disulfide. Asn-98 carries an N-linked (GlcNAc...) asparagine glycan. Residues Ser-159, 180 to 182 (AST), Tyr-230, and Asp-314 each bind L-glutamate. Disulfide bonds link Cys-249-Cys-541, Cys-374-Cys-390, Cys-430-Cys-437, Cys-523-Cys-542, Cys-527-Cys-545, Cys-548-Cys-560, and Cys-563-Cys-576. Position 407 (Lys-407) interacts with L-glutamate. Residues Asn-458 and Asn-486 are each glycosylated (N-linked (GlcNAc...) asparagine). Residue Asn-572 is glycosylated (N-linked (GlcNAc...) asparagine). The helical transmembrane segment at 591 to 615 (AVIPVFLAMLGIIATIFVMATFIRY) threads the bilayer. Over 616–627 (NDTPIVRASGRE) the chain is Cytoplasmic. Residues 628 to 648 (LSYVLLTGIFLCYIITFLMIA) form a helical membrane-spanning segment. Over 649-654 (KPDVAV) the chain is Extracellular. Residues 655–675 (CSFRRVFLGLGMCISYAALLT) traverse the membrane as a helical segment. At 676-702 (KTNRIYRIFEQGKKSVTAPRLISPTSQ) the chain is on the cytoplasmic side. The chain crosses the membrane as a helical span at residues 703–723 (LAITSSLISVQLLGVFIWFGV). Over 724–753 (DPPNIIIDYDEHKTMNPEQARGVLKCDITD) the chain is Extracellular. Residues 754–775 (LQIICSLGYSILLMVTCTVYAI) form a helical membrane-spanning segment. Topologically, residues 776–788 (KTRGVPENFNEAK) are cytoplasmic. Residues 789–810 (PIGFTMYTTCIVWLAFIPIFFG) form a helical membrane-spanning segment. Residues 811–825 (TAQSAEKLYIQTTTL) lie on the Extracellular side of the membrane. Residues 826-850 (TISMNLSASVALGMLYMPKVYIIIF) traverse the membrane as a helical segment. The Cytoplasmic segment spans residues 851 to 922 (HPELNVQKRK…VTWYTIPPTV (72 aa)).

Belongs to the G-protein coupled receptor 3 family. As to quaternary structure, homodimer. Interacts with PICK1.

The protein localises to the cell membrane. Functionally, G-protein coupled receptor activated by glutamate that regulates axon outgrowth through the MAPK-cAMP-PKA signaling pathway during neuronal development. Ligand binding causes a conformation change that triggers signaling via guanine nucleotide-binding proteins (G proteins) and modulates the activity of downstream effectors, such as adenylate cyclase that it inhibits. In Pongo abelii (Sumatran orangutan), this protein is Metabotropic glutamate receptor 7 (GRM7).